The chain runs to 208 residues: Thymidylate kinase (208 aa).

Position 10–17 (10–17 (GPDGSGKT)) interacts with ATP.

It belongs to the thymidylate kinase family.

It catalyses the reaction dTMP + ATP = dTDP + ADP. Functionally, phosphorylation of dTMP to form dTDP in both de novo and salvage pathways of dTTP synthesis. In Listeria monocytogenes serotype 4b (strain CLIP80459), this protein is Thymidylate kinase.